Here is a 361-residue protein sequence, read N- to C-terminus: uncharacterized protein (361 aa).

This is an uncharacterized protein from Schizosaccharomyces pombe (strain 972 / ATCC 24843) (Fission yeast).